Reading from the N-terminus, the 73-residue chain is Neurotoxin Cex13 (73 aa).

Positions 1–7 are cleaved as a signal peptide; it reads ATGNVWA. The region spanning 8 to 71 is the LCN-type CS-alpha/beta domain; sequence KDGYLVIIKT…TWPLPDKTCG (64 aa). Intrachain disulfides connect C19/C70, C23/C46, C32/C51, and C36/C53. Position 70 is a cysteine amide (C70). A propeptide spanning residues 71–73 is cleaved from the precursor; the sequence is GTK.

This sequence belongs to the long (4 C-C) scorpion toxin superfamily. Sodium channel inhibitor family. Beta subfamily. Expressed by the venom gland.

It localises to the secreted. Beta toxins bind voltage-independently at site-4 of sodium channels (Nav) and shift the voltage of activation toward more negative potentials thereby affecting sodium channel activation and promoting spontaneous and repetitive firing. The chain is Neurotoxin Cex13 from Centruroides exilicauda (Bark scorpion).